A 467-amino-acid chain; its full sequence is Cysteine--tRNA ligase (467 aa).

C29 lines the Zn(2+) pocket. The short motif at 31–41 (PTVYNYVHIGN) is the 'HIGH' region element. Residues C209, H234, and E238 each contribute to the Zn(2+) site. The 'KMSKS' region motif lies at 267–271 (KMSKS). Position 270 (K270) interacts with ATP.

Belongs to the class-I aminoacyl-tRNA synthetase family. Monomer. Zn(2+) is required as a cofactor.

It is found in the cytoplasm. It catalyses the reaction tRNA(Cys) + L-cysteine + ATP = L-cysteinyl-tRNA(Cys) + AMP + diphosphate. In Xylella fastidiosa (strain 9a5c), this protein is Cysteine--tRNA ligase.